A 140-amino-acid chain; its full sequence is Probable glycine cleavage system H protein 3 (140 aa).

Residues 29-110 form the Lipoyl-binding domain; the sequence is VVSIGVTDLG…PYDSWIVKIR (82 aa). Lys70 carries the post-translational modification N6-lipoyllysine.

It belongs to the GcvH family. In terms of assembly, the glycine cleavage system is composed of four proteins: P, T, L and H. (R)-lipoate is required as a cofactor.

Its function is as follows. The glycine cleavage system catalyzes the degradation of glycine. The H protein shuttles the methylamine group of glycine from the P protein to the T protein. This chain is Probable glycine cleavage system H protein 3, found in Saccharolobus solfataricus (strain ATCC 35092 / DSM 1617 / JCM 11322 / P2) (Sulfolobus solfataricus).